The primary structure comprises 690 residues: Elongation factor G (690 aa).

The tr-type G domain maps to 8-283 (EDYRNFGIMA…AVVDFLPSPL (276 aa)). GTP is bound by residues 17–24 (AHIDAGKT), 81–85 (DTPGH), and 135–138 (NKMD).

Belongs to the TRAFAC class translation factor GTPase superfamily. Classic translation factor GTPase family. EF-G/EF-2 subfamily.

It is found in the cytoplasm. Its function is as follows. Catalyzes the GTP-dependent ribosomal translocation step during translation elongation. During this step, the ribosome changes from the pre-translocational (PRE) to the post-translocational (POST) state as the newly formed A-site-bound peptidyl-tRNA and P-site-bound deacylated tRNA move to the P and E sites, respectively. Catalyzes the coordinated movement of the two tRNA molecules, the mRNA and conformational changes in the ribosome. The polypeptide is Elongation factor G (Nitrobacter hamburgensis (strain DSM 10229 / NCIMB 13809 / X14)).